The following is a 300-amino-acid chain: MSQDPILTSKGSQEEEEDFFGLDNFFPEPESPLPPPFSFASYDIPANIDFYVPDHRKSLILRLVGSHPLWGHHLWNTARTLSTYLLETPQITQSRHVLELGAGAGLPSIVCVLAGSSKVIVTDYSDEGLLDNLRFNVDVNLEGEEKERIAVDGHVWGQSVDPLLGHLPKGQKYDLLILSDLVFNHSQHDALIKTVEATLTSSSTQSYDPSNPSAPLTEPSILVFFTHHRPHLAHADMAFFPRLAESGNGWAYEKVVEEWAGAMFENDPGDKKVRGTVHGWRAWRVRDGEERGEKPSRISL.

S-adenosyl-L-methionine contacts are provided by residues W75, 101–103 (GAG), D123, W156, and S179.

The protein belongs to the class I-like SAM-binding methyltransferase superfamily. EFM7 family.

The protein localises to the cytoplasm. In terms of biological role, S-adenosyl-L-methionine-dependent protein methyltransferase that trimethylates the N-terminal glycine 'Gly-2' of elongation factor 1-alpha, before also catalyzing the mono- and dimethylation of 'Lys-3'. The protein is Protein N-terminal and lysine N-methyltransferase EFM7 of Cryptococcus neoformans var. neoformans serotype D (strain JEC21 / ATCC MYA-565) (Filobasidiella neoformans).